The following is a 384-amino-acid chain: Urea transporter 1 (384 aa).

Transmembrane regions (helical) follow at residues 61 to 81 (ISQV…AGLL), 85 to 105 (PWWA…ALLL), 111 to 131 (AIAA…MAVF), 138 to 158 (FWWL…FSSA), and 168 to 188 (LPVF…ATGH). Asn-206 carries an N-linked (GlcNAc...) asparagine glycan. 4 helical membrane-spanning segments follow: residues 250-270 (LMCL…LSLA), 279-299 (GLWG…FMAL), 305-325 (LLAL…THLM), and 327-347 (AVHL…FLLL).

Belongs to the urea transporter family. As to quaternary structure, homotrimer; each subunit contains a pore through which urea permeates. Identified in a complex with STOM. Expressed in brain, spleen, kidney, testis and lung, with highest levels in brain.

Its subcellular location is the cell membrane. The protein localises to the basolateral cell membrane. The enzyme catalyses urea(in) = urea(out). Functionally, mediates the transport of urea driven by a concentration gradient across the cell membrane. Mediates the transport of urea across the cell membranes of erythrocytes and the renal inner medullary collecting duct which is critical to the urinary concentrating mechanism. Facilitates water transport in erythrocytes. This chain is Urea transporter 1 (Slc14a1), found in Rattus norvegicus (Rat).